The chain runs to 205 residues: Macrophage immunometabolism regulator (205 aa).

The segment at 1-40 (MEVDINGVNRTNNSVPSTTEGSSPSKPDPEKPRCSSTPCS) is disordered. The segment covering 8 to 25 (VNRTNNSVPSTTEGSSPS) has biased composition (polar residues).

This sequence belongs to the UNC119-binding protein family. In terms of assembly, interacts with unc119 family proteins; interaction preferentially takes place when unc119 proteins are unliganded with myristoylated proteins.

It localises to the cytoplasm. It is found in the cell projection. Its subcellular location is the cilium. In terms of biological role, may play a role in immune regulation through regulation of the macrophage function. May also play a role in trafficking of proteins via its interaction with unc119 family cargo adapters. May play a role in ciliary membrane localization. This is Macrophage immunometabolism regulator (macir) from Xenopus tropicalis (Western clawed frog).